A 288-amino-acid polypeptide reads, in one-letter code: S-methyl-5'-thioadenosine phosphorylase (288 aa).

Phosphate contacts are provided by residues Ser12, 54-55 (RH), and 87-88 (SA). Met186 contacts substrate. Residue Thr187 participates in phosphate binding. 210–212 (DYD) contributes to the substrate binding site.

It belongs to the PNP/MTAP phosphorylase family. MTAP subfamily. In terms of assembly, homohexamer. Dimer of a homotrimer.

It catalyses the reaction S-methyl-5'-thioadenosine + phosphate = 5-(methylsulfanyl)-alpha-D-ribose 1-phosphate + adenine. Its pathway is amino-acid biosynthesis; L-methionine biosynthesis via salvage pathway; S-methyl-5-thio-alpha-D-ribose 1-phosphate from S-methyl-5'-thioadenosine (phosphorylase route): step 1/1. In terms of biological role, catalyzes the reversible phosphorylation of S-methyl-5'-thioadenosine (MTA) to adenine and 5-methylthioribose-1-phosphate. Involved in the breakdown of MTA, a major by-product of polyamine biosynthesis. Responsible for the first step in the methionine salvage pathway after MTA has been generated from S-adenosylmethionine. Has broad substrate specificity with 6-aminopurine nucleosides as preferred substrates. This is S-methyl-5'-thioadenosine phosphorylase from Chloroflexus aurantiacus (strain ATCC 29366 / DSM 635 / J-10-fl).